The sequence spans 365 residues: Neuronal migration protein doublecortin (365 aa).

The segment at 11–31 (RDKTSRNMRGSRMNGLPSPTH) is disordered. Phosphothreonine; by PKC is present on Thr-14. Ser-28 is modified (phosphoserine; by CDK5). Ser-47 carries the phosphoserine; by MARK1 and PKA modification. 2 Doublecortin domains span residues 53–139 (KKVR…VEYT) and 180–263 (KLVT…AQDD). Tyr-70 bears the Phosphotyrosine; by ABL mark. At Ser-74 the chain carries Phosphoserine; by PKC. Phosphoserine; by CK2 is present on Ser-90. At Ser-110 the chain carries Phosphoserine; by PKC. Ser-115 is modified (phosphoserine; by CK2, MARK1 and PKA). Ser-265 carries the post-translational modification Phosphoserine; by CK2. Positions 275 to 365 (KGNPSATAGP…DDSDSLGDSM (91 aa)) are disordered. Ser-287 is modified (phosphoserine; by CDK5). Thr-289 is modified (phosphothreonine; by CDK5). Ser-294 is modified (phosphoserine; by PKC). A Phosphoserine; by CDK5 modification is found at Ser-297. Ser-306 is subject to Phosphoserine; by CK2. Position 306 is a phosphoserine; by DYRK2 (Ser-306). Positions 307-341 (PADSGNDQDANGTSSSQLSTPKSKQSPISTPTSPG) are enriched in polar residues. A Phosphothreonine; by CDK5 modification is found at Thr-326. Residue Thr-326 is modified to Phosphothreonine; by PKC and MAPK. Ser-332 carries the phosphoserine; by CDK5 modification. Ser-332 is subject to Phosphoserine; by MAPK. Phosphothreonine; by MAPK is present on Thr-336. Ser-339 carries the phosphoserine; by CDK5 modification. Ser-339 carries the phosphoserine; by MAPK modification. Residue Ser-342 is modified to Phosphoserine; by PKC. Phosphoserine; by CK2 occurs at positions 354 and 360. The span at 356–365 (DDSDSLGDSM) shows a compositional bias: acidic residues.

In terms of assembly, interacts with tubulin. Interacts with USP9X. In terms of processing, phosphorylation by MARK1, MARK2 and PKA regulates its ability to bind microtubules. Phosphorylation at Ser-265 and Ser-297 seems to occur only in neonatal brain, the levels falling precipitously by postnatal day 21. Post-translationally, ubiquitinated by MDM2, leading to its degradation by the proteasome. Ubiquitinated by MDM2 and subsequent degradation leads to reduce the dendritic spine density of olfactory bulb granule cells. In terms of tissue distribution, highly expressed in neuronal cells of fetal brain (in the majority of cells of the cortical plate, intermediate zone and ventricular zone), but not expressed in other fetal tissues. In the adult, highly expressed in the brain frontal lobe, but very low expression in other regions of brain, and not detected in heart, placenta, lung, liver, skeletal muscles, kidney and pancreas.

It is found in the cytoplasm. Its subcellular location is the cell projection. The protein resides in the neuron projection. Functionally, microtubule-associated protein required for initial steps of neuronal dispersion and cortex lamination during cerebral cortex development. May act by competing with the putative neuronal protein kinase DCLK1 in binding to a target protein. May in that way participate in a signaling pathway that is crucial for neuronal interaction before and during migration, possibly as part of a calcium ion-dependent signal transduction pathway. May be part with PAFAH1B1/LIS-1 of overlapping, but distinct, signaling pathways that promote neuronal migration. The polypeptide is Neuronal migration protein doublecortin (DCX) (Homo sapiens (Human)).